A 504-amino-acid chain; its full sequence is CaM kinase-like vesicle-associated protein (504 aa).

Positions Tyr-24 to Ile-286 constitute a Protein kinase domain. The segment at Lys-378 to Ser-504 is disordered. Residue Ser-384 is modified to Phosphoserine. Polar residues predominate over residues Thr-390 to Pro-431. Phosphothreonine occurs at positions 438 and 462. Residues Thr-445 to Pro-470 are compositionally biased toward low complexity.

Belongs to the protein kinase superfamily. CAMK Ser/Thr protein kinase family. Interacts with calmodulin, in the presence of calcium. It depends on Ca(2+) as a cofactor. As to expression, expressed in brain and weakly in eye. Not detected in liver, kidney, spleen, thymus, bladder, aorta, lung, intestine, esophagus, stomach, skeletal muscle, heart, diaphragm, uterus, tail skin, submaxillary gland, prostate, ear, epididymis, placenta, pancreas, ovary, testis, adrenal gland, parathyroid gland, thyroid gland, pineal gland, pituitary and sciatic nerve. In adult hippocampus, predominantly expressed in caudate nucleus, cortex, hypothalamus, olfactory bulb, and midbrain and faintly in pons, brainstem and spinal cord.

The protein resides in the cell membrane. It is found in the cytoplasmic vesicle membrane. In terms of biological role, has no detectable kinase activity in vitro. This is CaM kinase-like vesicle-associated protein (Camkv) from Rattus norvegicus (Rat).